A 296-amino-acid chain; its full sequence is Ribonuclease MRP protein subunit POP4 (296 aa).

Disordered regions lie at residues L29–K74 and S148–K173. Residues K36–Q56 are compositionally biased toward basic and acidic residues. Residues A57 to T66 show a composition bias toward polar residues. The short motif at S160–M167 is the Nuclear localization signal element. Basic residues predominate over residues S163 to K173.

Belongs to the eukaryotic/archaeal RNase P protein component 1 family. In terms of assembly, component of nuclear RNase MRP complexes. Several subunits of RNase P are also part of the RNase MRP complex. RNase MRP consists of a catalytic RNA moiety and several protein subunits.

The protein localises to the nucleus. In terms of biological role, component of the MRP ribonuclease complex, which cleaves pre-rRNA sequences. Required for rRNA maturation, including 5.8S rRNA processing. Seems not involved in tRNA maturation. The protein is Ribonuclease MRP protein subunit POP4 of Arabidopsis thaliana (Mouse-ear cress).